Here is a 432-residue protein sequence, read N- to C-terminus: MQVSVETTQGLGRRVTITIAADSIENAVKSELVNVAKKVRIDGFRKGKVPMNVVAQRYGASVRQDVLGDLMSRHFVDAIIKEKINPAGAPNYVPGEYKLGEDFTYAVEFEVYPEVELQGLDAIEVEKPVVEVTDADVDTMLETLRKQQATWKDKDGAVDAEDRVTIDFTGSVDGEEFEGGKASDFVLAMGQGRMIPGFEDGIKGHKAGEEFTIDVTFPEEYHAENLKGKAAKFVINLKKVEERELPELTEEFIKRFGVEDGSVAGLRAEVRKNMERELKGAVRNRVKSQAIEGLVKANEIDVPAALIDSEIDVLRRQAAQRFGGNEKQALELPRELFEEQAKRRVVVGLLLGEVIRTNELKADEERVKGLIEEMASAYEDPSEVVEFYSKNKELMDNMRNVALEEQAVEAVLAKAKVSEKATSFNELMNQQA.

One can recognise a PPIase FKBP-type domain in the interval 161 to 246 (EDRVTIDFTG…LKKVEERELP (86 aa)).

The protein belongs to the FKBP-type PPIase family. Tig subfamily.

Its subcellular location is the cytoplasm. The enzyme catalyses [protein]-peptidylproline (omega=180) = [protein]-peptidylproline (omega=0). Involved in protein export. Acts as a chaperone by maintaining the newly synthesized protein in an open conformation. Functions as a peptidyl-prolyl cis-trans isomerase. This chain is Trigger factor, found in Klebsiella pneumoniae (strain 342).